A 334-amino-acid chain; its full sequence is MATLKEKLIAPVAEEEAAAPNNKITVVGVGQVGMACAISILGKSLADELALVDVLEDKLKGEMMDLQHGSLFFQTPKIVADKDYSVTAGSKIVVVTAGVRQQEGESRLNLVQRNVNVFKFIIPQIVKYSPDCTIIVVSNPVDILTYVTWKLSGLPKHRVIGSGCNLDSARFRYLMSEKLGIHPSSCHGWILGEHGDSSVAVWSGVNVAGVSLQELNPEMGTDNDSENWKEVHKLVIESAYEVIKLKGYTNWAIGLSVADLIETMLKNLSRIHPVSTMVKGMYGIENEVFLSLPCILNARGLTSVINQKLKDDEVAQLKKSADTLWDIQKDLKDL.

Alanine 2 carries the N-acetylalanine modification. Lysine 7 is modified (N6-acetyllysine). Position 44 is a phosphoserine (serine 44). Residues 53–58 and arginine 100 each bind NAD(+); that span reads DVLEDK. Residue lysine 58 is modified to N6-acetyllysine. Arginine 107 serves as a coordination point for substrate. Lysine 119 carries the post-translational modification N6-acetyllysine. Residue asparagine 139 participates in NAD(+) binding. The substrate site is built by asparagine 139 and arginine 170. Histidine 194 serves as the catalytic Proton acceptor. Tyrosine 240 carries the post-translational modification Phosphotyrosine. Threonine 249 contributes to the substrate binding site. Lysine 329 bears the N6-acetyllysine mark.

The protein belongs to the LDH/MDH superfamily. LDH family. In terms of assembly, homotetramer. Interacts with PTEN upstream reading frame protein MP31; the interaction leads to inhibition of mitochondrial lactate dehydrogenase activity, preventing conversion of lactate to pyruvate in mitochondria.

Its subcellular location is the cytoplasm. It is found in the mitochondrion inner membrane. It catalyses the reaction (S)-lactate + NAD(+) = pyruvate + NADH + H(+). It participates in fermentation; pyruvate fermentation to lactate; (S)-lactate from pyruvate: step 1/1. Its function is as follows. Interconverts simultaneously and stereospecifically pyruvate and lactate with concomitant interconversion of NADH and NAD(+). The chain is L-lactate dehydrogenase B chain (LDHB) from Monodelphis domestica (Gray short-tailed opossum).